The following is a 65-amino-acid chain: uncharacterized protein (65 aa).

Residues 24-65 (NNNNNNNNNNNNNNNNNNNNNNNNNNNNNNNKNNKNNNKNND) are disordered.

This is an uncharacterized protein from Dictyostelium discoideum (Social amoeba).